A 304-amino-acid chain; its full sequence is uncharacterized protein (304 aa).

This is an uncharacterized protein from Ureaplasma parvum serovar 3 (strain ATCC 700970).